The chain runs to 65 residues: Alpha-conotoxine-like Am1.5 (65 aa).

The signal sequence occupies residues 1–21; it reads MGMRMMFTVFLLVVLATTVVS. Positions 22-46 are excised as a propeptide; sequence FMSGRAFRDRNAAAKVSDLIALKAR. Glu49 carries the post-translational modification 4-carboxyglutamate. Residues 52–54 are ser-Xaa-Pro motif, crucial for potent interaction with nAChR; the sequence is SHP. Residues Pro54 and Pro61 each carry the 4-hydroxyproline modification. At Glu62 the chain carries 4-carboxyglutamate.

The protein belongs to the conotoxin A superfamily. Contains 2 disulfide bonds. As to expression, expressed by the venom duct.

The protein localises to the secreted. Functionally, alpha-conotoxins act on postsynaptic membranes, they bind to the nicotinic acetylcholine receptors (nAChR) and thus inhibit them. This Conus amadis (Amadis cone) protein is Alpha-conotoxine-like Am1.5.